The sequence spans 1479 residues: Chromosome partition protein MukB (1479 aa).

An ATP-binding site is contributed by 34–41 (GGNGAGKS). Coiled coils occupy residues 337 to 418 (LNLV…QYQQ), 511 to 603 (QAER…RAPV), 780 to 810 (RAAREMRLESLRDEREALAEQYATLSFDVQK), 847 to 1116 (ELDR…AKAG), and 1206 to 1265 (DDPV…LQAV). Residues 666-783 (PGGSEDPRLN…EVPLFGRAAR (118 aa)) are flexible hinge.

It belongs to the SMC family. MukB subfamily. As to quaternary structure, homodimerization via its hinge domain. Binds to DNA via its C-terminal region. Interacts, and probably forms a ternary complex, with MukE and MukF via its C-terminal region. The complex formation is stimulated by calcium or magnesium. Interacts with tubulin-related protein FtsZ.

Its subcellular location is the cytoplasm. It is found in the nucleoid. In terms of biological role, plays a central role in chromosome condensation, segregation and cell cycle progression. Functions as a homodimer, which is essential for chromosome partition. Involved in negative DNA supercoiling in vivo, and by this means organize and compact chromosomes. May achieve or facilitate chromosome segregation by condensation DNA from both sides of a centrally located replisome during cell division. In Pectobacterium carotovorum subsp. carotovorum (strain PC1), this protein is Chromosome partition protein MukB.